A 216-amino-acid polypeptide reads, in one-letter code: Urease accessory protein UreG (216 aa).

25–32 contacts GTP; sequence GPVGSGKT.

This sequence belongs to the SIMIBI class G3E GTPase family. UreG subfamily. As to quaternary structure, homodimer. UreD, UreF and UreG form a complex that acts as a GTP-hydrolysis-dependent molecular chaperone, activating the urease apoprotein by helping to assemble the nickel containing metallocenter of UreC. The UreE protein probably delivers the nickel.

Its subcellular location is the cytoplasm. Its function is as follows. Facilitates the functional incorporation of the urease nickel metallocenter. This process requires GTP hydrolysis, probably effectuated by UreG. The polypeptide is Urease accessory protein UreG (Burkholderia thailandensis (strain ATCC 700388 / DSM 13276 / CCUG 48851 / CIP 106301 / E264)).